A 592-amino-acid polypeptide reads, in one-letter code: A-type ATP synthase subunit A (592 aa).

233 to 240 contacts ATP; sequence GPFGSGKT.

It belongs to the ATPase alpha/beta chains family. In terms of assembly, has multiple subunits with at least A(3), B(3), C, D, E, F, H, I and proteolipid K(x).

It is found in the cell membrane. It carries out the reaction ATP + H2O + 4 H(+)(in) = ADP + phosphate + 5 H(+)(out). Its function is as follows. Component of the A-type ATP synthase that produces ATP from ADP in the presence of a proton gradient across the membrane. The A chain is the catalytic subunit. The polypeptide is A-type ATP synthase subunit A (Saccharolobus islandicus (strain L.S.2.15 / Lassen #1) (Sulfolobus islandicus)).